Reading from the N-terminus, the 31-residue chain is Malate dehydrogenase, mitochondrial (31 aa).

NAD(+)-binding positions include 9 to 19 (GIGQPLSLLMK) and 20 to 31 (DDLFNINAGIVK).

This sequence belongs to the LDH/MDH superfamily. MDH type 1 family. In terms of assembly, homodimer.

The protein localises to the mitochondrion matrix. The catalysed reaction is (S)-malate + NAD(+) = oxaloacetate + NADH + H(+). The chain is Malate dehydrogenase, mitochondrial from Imperata cylindrica (Cogon grass).